Consider the following 305-residue polypeptide: 4-diphosphocytidyl-2-C-methyl-D-erythritol kinase (305 aa).

The active site involves lysine 15. 99–109 (PMGGGIGGGSS) is a binding site for ATP. Residue aspartate 141 is part of the active site.

This sequence belongs to the GHMP kinase family. IspE subfamily.

It carries out the reaction 4-CDP-2-C-methyl-D-erythritol + ATP = 4-CDP-2-C-methyl-D-erythritol 2-phosphate + ADP + H(+). Its pathway is isoprenoid biosynthesis; isopentenyl diphosphate biosynthesis via DXP pathway; isopentenyl diphosphate from 1-deoxy-D-xylulose 5-phosphate: step 3/6. Its function is as follows. Catalyzes the phosphorylation of the position 2 hydroxy group of 4-diphosphocytidyl-2C-methyl-D-erythritol. This Marinomonas sp. (strain MWYL1) protein is 4-diphosphocytidyl-2-C-methyl-D-erythritol kinase.